The primary structure comprises 544 residues: Glycoprotein gp100 (544 aa).

The N-terminal stretch at 1 to 19 (MKNFILLVFLFLLVSNSLG) is a signal peptide. The Extracellular segment spans residues 20–489 (KSNKKDDQSP…SGGGGNKKLY (470 aa)). N-linked (GlcNAc...) asparagine glycosylation is present at N80. Over residues 84 to 99 (EPQNNPIPTVSINPDQ) the composition is skewed to polar residues. The tract at residues 84 to 215 (EPQNNPIPTV…TPTRPSSSVS (132 aa)) is disordered. Composition is skewed to low complexity over residues 126 to 142 (SKPTSTPTSTPSQTIPP), 150 to 165 (PQTTSPTSKPTSTPTP), and 189 to 199 (PKPTKSSKPTK). N224, N308, N332, N366, N380, N410, N422, and N478 each carry an N-linked (GlcNAc...) asparagine glycan. Residues 444–480 (KPSTTDDDNNKNNDDGDSEIDSVGKSAVDSSKSNNNS) form a disordered region. The chain crosses the membrane as a helical span at residues 490–510 (LLIILPTVLFIIVAALVAIFI). Over 511–544 (KTRVSQNSGSKVNKNNNKKDSINVPFQMLDEITT) the chain is Cytoplasmic.

N- and O-glycosylated.

Its subcellular location is the membrane. This chain is Glycoprotein gp100 (gppA), found in Dictyostelium discoideum (Social amoeba).